The primary structure comprises 852 residues: Leucine--tRNA ligase (852 aa).

Positions 41 to 51 (PYPSGRIHIGH) match the 'HIGH' region motif. The 'KMSKS' region motif lies at 623 to 627 (KMSKS). K626 contacts ATP.

It belongs to the class-I aminoacyl-tRNA synthetase family.

The protein resides in the cytoplasm. It carries out the reaction tRNA(Leu) + L-leucine + ATP = L-leucyl-tRNA(Leu) + AMP + diphosphate. The chain is Leucine--tRNA ligase from Ruegeria pomeroyi (strain ATCC 700808 / DSM 15171 / DSS-3) (Silicibacter pomeroyi).